The primary structure comprises 451 residues: UDP-N-acetylmuramate--L-alanine ligase (451 aa).

Residue glycine 110–threonine 116 coordinates ATP.

It belongs to the MurCDEF family.

It localises to the cytoplasm. It carries out the reaction UDP-N-acetyl-alpha-D-muramate + L-alanine + ATP = UDP-N-acetyl-alpha-D-muramoyl-L-alanine + ADP + phosphate + H(+). It functions in the pathway cell wall biogenesis; peptidoglycan biosynthesis. Functionally, cell wall formation. This is UDP-N-acetylmuramate--L-alanine ligase from Francisella tularensis subsp. tularensis (strain SCHU S4 / Schu 4).